Reading from the N-terminus, the 435-residue chain is Cell adhesion molecule 2 (435 aa).

Residues 1 to 24 (MIWKRSAVLRFYSVCGLLLLGSQG) form the signal peptide. Over 25–367 (QFPLTQNVTV…SLAGQNGPDH (343 aa)) the chain is Extracellular. Residues 27–119 (PLTQNVTVVE…PVKTSKAYLT (93 aa)) enclose the Ig-like V-type domain. N31 and N51 each carry an N-linked (GlcNAc...) asparagine glycan. 3 disulfide bridges follow: C44/C104, C146/C203, and C248/C296. Ig-like C2-type domains follow at residues 127–219 (PQIS…VAMQ) and 227–312 (PSVK…YVLI). N291 carries an N-linked (GlcNAc...) asparagine glycan. Residues 341-351 (TTSPSTSASSS) show a composition bias toward low complexity. The segment at 341–360 (TTSPSTSASSSSRRDPNSLA) is disordered. The helical transmembrane segment at 368 to 388 (ALIGGIVAVVVFVTLCSIFLL) threads the bilayer. At 389-435 (GRYLARHKGTYLTNEAKGAEDAPDADTAIINAEGSQVNAEEKKEYFI) the chain is on the cytoplasmic side. S423 bears the Phosphoserine mark.

The protein belongs to the nectin family. In terms of processing, glycosylation at Asn-51 reduces adhesive binding.

The protein localises to the cell membrane. Its subcellular location is the synapse. It localises to the cell projection. The protein resides in the axon. Adhesion molecule that engages in homo- and heterophilic interactions with the other nectin-like family members, leading to cell aggregation. Important for synapse organization, providing regulated trans-synaptic adhesion. Preferentially binds to oligodendrocytes. The polypeptide is Cell adhesion molecule 2 (Cadm2) (Rattus norvegicus (Rat)).